We begin with the raw amino-acid sequence, 159 residues long: MIDPDGFRPNVGIILTNDAGQVLWARRINQDAWQFPQGGINPDETPEDALYRELNEEVGLEREDVQILACTRGWLRYRLPQRLVRTHSQPLCIGQKQKWFLLRLISNEQRVRMDLTGKPEFDGWRWVSYWYPLGQVVTFKREVYRRALKELAPRLLVRD.

Positions 6-149 (GFRPNVGIIL…KREVYRRALK (144 aa)) constitute a Nudix hydrolase domain. The short motif at 38-59 (GGINPDETPEDALYRELNEEVG) is the Nudix box element.

It belongs to the Nudix hydrolase family. RppH subfamily. The cofactor is a divalent metal cation.

Its function is as follows. Accelerates the degradation of transcripts by removing pyrophosphate from the 5'-end of triphosphorylated RNA, leading to a more labile monophosphorylated state that can stimulate subsequent ribonuclease cleavage. The polypeptide is RNA pyrophosphohydrolase (Pseudomonas fluorescens (strain ATCC BAA-477 / NRRL B-23932 / Pf-5)).